A 658-amino-acid polypeptide reads, in one-letter code: Glycogen debranching enzyme (658 aa).

Asp336 acts as the Nucleophile in catalysis. Glu371 (proton donor) is an active-site residue.

This sequence belongs to the glycosyl hydrolase 13 family.

The enzyme catalyses Hydrolysis of (1-&gt;6)-alpha-D-glucosidic linkages to branches with degrees of polymerization of three or four glucose residues in limit dextrin.. It functions in the pathway glycan degradation; glycogen degradation. In terms of biological role, removes maltotriose and maltotetraose chains that are attached by 1,6-alpha-linkage to the limit dextrin main chain, generating a debranched limit dextrin. The polypeptide is Glycogen debranching enzyme (Klebsiella pneumoniae subsp. pneumoniae (strain ATCC 700721 / MGH 78578)).